A 1255-amino-acid chain; its full sequence is Pre-mRNA-splicing factor ATP-dependent RNA helicase DEAH7 (1255 aa).

Residues 1 to 316 (MGVDPFKTTE…SDEDRSQGAE (316 aa)) form a disordered region. The segment covering 13 to 60 (EADKETNGGVPVKDKLTFKAPERKSRLGLDARAIEKKDNAKTEGEFKV) has biased composition (basic and acidic residues). Residues 109–137 (AQESTVTTENAGTSDISITPRTLSCTSSY) show a composition bias toward polar residues. Short sequence motifs (nuclear localization signal) lie at residues 144-153 (RHREEHRRDR) and 172-191 (RRRE…KRRR). Residues 144-219 (RHREEHRRDR…EWERSPHGDR (76 aa)) show a composition bias toward basic and acidic residues. 2 stretches are compositionally biased toward low complexity: residues 220–240 (GSSY…AASP) and 271–290 (PIRA…GGRS). Residues 297–316 (REGDLTNEGHSDEDRSQGAE) show a composition bias toward basic and acidic residues. The Helicase ATP-binding domain occupies 568-731 (LQVIRENQVI…FGSVPIFNIP (164 aa)). 581 to 588 (GETGSGKT) is an ATP binding site. A DEAH box motif is present at residues 678 to 681 (DEAH). Residues 753 to 933 (AVKQAMTIHI…NVVLLLKSLK (181 aa)) enclose the Helicase C-terminal domain. Over residues 1190–1224 (LEHKKKQKEEKSGMEEEMEKLRRDQVESELRSKER) the composition is skewed to basic and acidic residues. The interval 1190 to 1255 (LEHKKKQKEE…TFLRPKKLGL (66 aa)) is disordered.

The protein belongs to the DEAD box helicase family. DEAH subfamily. PRP16 sub-subfamily. As to quaternary structure, interacts with the Phytophthora PSR1 protein.

Its subcellular location is the nucleus. The catalysed reaction is ATP + H2O = ADP + phosphate + H(+). Its function is as follows. Involved in pre-mRNA splicing by mediating structural transitions of the spliceosome during the catalytic step. Facilitates expression of genes involved in auxin-mediated development including male-gametophyte transmission, apical-basal patterning of embryonic and gynoecium development, stamen development, phyllotactic flower positioning, and vascular development. Also involved in root-meristem maintenance and planar polarity of root-hair positioning. Acts as a component of RNA silencing that regulates distinct classes of endogenous small RNAs. Functions as a positive regulator of plant immunity. This is Pre-mRNA-splicing factor ATP-dependent RNA helicase DEAH7 from Arabidopsis thaliana (Mouse-ear cress).